A 124-amino-acid polypeptide reads, in one-letter code: Small ribosomal subunit protein uS12 (124 aa).

Positions 1 to 29 (MPTINQLVRRPRRPRESANKAPALQHNPQ) are disordered. Asp90 carries the post-translational modification 3-methylthioaspartic acid.

The protein belongs to the universal ribosomal protein uS12 family. Part of the 30S ribosomal subunit. Contacts proteins S8 and S17. May interact with IF1 in the 30S initiation complex.

In terms of biological role, with S4 and S5 plays an important role in translational accuracy. Interacts with and stabilizes bases of the 16S rRNA that are involved in tRNA selection in the A site and with the mRNA backbone. Located at the interface of the 30S and 50S subunits, it traverses the body of the 30S subunit contacting proteins on the other side and probably holding the rRNA structure together. The combined cluster of proteins S8, S12 and S17 appears to hold together the shoulder and platform of the 30S subunit. The chain is Small ribosomal subunit protein uS12 from Anaplasma marginale (strain Florida).